The chain runs to 403 residues: Imidazolonepropionase (403 aa).

Fe(3+)-binding residues include His74 and His76. Zn(2+)-binding residues include His74 and His76. 4-imidazolone-5-propanoate is bound by residues Arg83, Tyr146, and His179. An N-formimidoyl-L-glutamate-binding site is contributed by Tyr146. His242 contributes to the Fe(3+) binding site. His242 serves as a coordination point for Zn(2+). Position 245 (Gln245) interacts with 4-imidazolone-5-propanoate. Asp317 is a Fe(3+) binding site. Position 317 (Asp317) interacts with Zn(2+). Residues Asn319 and Gly321 each coordinate N-formimidoyl-L-glutamate. A 4-imidazolone-5-propanoate-binding site is contributed by Thr322.

This sequence belongs to the metallo-dependent hydrolases superfamily. HutI family. It depends on Zn(2+) as a cofactor. Fe(3+) is required as a cofactor.

It localises to the cytoplasm. The enzyme catalyses 4-imidazolone-5-propanoate + H2O = N-formimidoyl-L-glutamate. It participates in amino-acid degradation; L-histidine degradation into L-glutamate; N-formimidoyl-L-glutamate from L-histidine: step 3/3. Functionally, catalyzes the hydrolytic cleavage of the carbon-nitrogen bond in imidazolone-5-propanoate to yield N-formimidoyl-L-glutamate. It is the third step in the universal histidine degradation pathway. The chain is Imidazolonepropionase from Sphingopyxis alaskensis (strain DSM 13593 / LMG 18877 / RB2256) (Sphingomonas alaskensis).